The chain runs to 205 residues: Small ribosomal subunit protein uS4c (205 aa).

The segment at 16–40 (GKLPSLTNKTSKKRKSPGQPATSFK) is disordered. The 69-residue stretch at 93–161 (MRLDNIVHRI…IQKNIESKEL (69 aa)) folds into the S4 RNA-binding domain.

Belongs to the universal ribosomal protein uS4 family. In terms of assembly, part of the 30S ribosomal subunit. Contacts protein S5. The interaction surface between S4 and S5 is involved in control of translational fidelity.

The protein resides in the plastid. Its subcellular location is the chloroplast. In terms of biological role, one of the primary rRNA binding proteins, it binds directly to 16S rRNA where it nucleates assembly of the body of the 30S subunit. With S5 and S12 plays an important role in translational accuracy. The protein is Small ribosomal subunit protein uS4c (rps4) of Euglena gracilis.